Reading from the N-terminus, the 79-residue chain is Translational regulator CsrA (79 aa).

The protein belongs to the CsrA/RsmA family. In terms of assembly, homodimer; the beta-strands of each monomer intercalate to form a hydrophobic core, while the alpha-helices form wings that extend away from the core.

Its subcellular location is the cytoplasm. A translational regulator that binds mRNA to regulate translation initiation and/or mRNA stability. Usually binds in the 5'-UTR at or near the Shine-Dalgarno sequence preventing ribosome-binding, thus repressing translation. Its main target seems to be the major flagellin gene, while its function is anatagonized by FliW. The protein is Translational regulator CsrA of Maridesulfovibrio salexigens (strain ATCC 14822 / DSM 2638 / NCIMB 8403 / VKM B-1763) (Desulfovibrio salexigens).